A 519-amino-acid chain; its full sequence is Cytochrome P450 72C1 (519 aa).

Residues 10-30 form a helical membrane-spanning segment; sequence VFLIGFLILILNWVWRAVNWV. Residue Cys467 participates in heme binding.

This sequence belongs to the cytochrome P450 family. Requires heme as cofactor. Expressed in hypocotyls, roots, cotyledons, stamens and silique junctions.

It localises to the membrane. In terms of biological role, atypical cytochrome P450 involved in brassinosteroids (BRs) inactivation and regulation of BRs homeostasis. Does not possess carbon 26 hydroxylase activity and may inactivate BRs by hydroxylation of carbons other than C-26. Acts in association with CYP734A1 to inactivate BRs and modulate photomorphogenesis. The sequence is that of Cytochrome P450 72C1 (CYP72C1) from Arabidopsis thaliana (Mouse-ear cress).